A 529-amino-acid polypeptide reads, in one-letter code: CTP synthase (529 aa).

Positions 1-266 are amidoligase domain; the sequence is MTKYIIVTGG…TKKIFNKLGL (266 aa). A CTP-binding site is contributed by S13. Residue S13 coordinates UTP. Position 14–19 (14–19) interacts with ATP; the sequence is SVGKGT. Y54 is an L-glutamine binding site. D71 is an ATP binding site. Mg(2+) contacts are provided by D71 and E141. CTP-binding positions include 148-150, 187-192, and K223; these read DIE and KTKPLQ. Residues 187-192 and K223 contribute to the UTP site; that span reads KTKPLQ. The region spanning 291-529 is the Glutamine amidotransferase type-1 domain; that stretch reads KIALVGKYTK…FLNFLSVASA (239 aa). Residue G354 coordinates L-glutamine. C381 acts as the Nucleophile; for glutamine hydrolysis in catalysis. L-glutamine-binding positions include 382 to 385, E405, and R462; that span reads FGMQ. Active-site residues include H506 and E508.

It belongs to the CTP synthase family. As to quaternary structure, homotetramer.

The enzyme catalyses UTP + L-glutamine + ATP + H2O = CTP + L-glutamate + ADP + phosphate + 2 H(+). It catalyses the reaction L-glutamine + H2O = L-glutamate + NH4(+). The catalysed reaction is UTP + NH4(+) + ATP = CTP + ADP + phosphate + 2 H(+). It participates in pyrimidine metabolism; CTP biosynthesis via de novo pathway; CTP from UDP: step 2/2. Its activity is regulated as follows. Allosterically activated by GTP, when glutamine is the substrate; GTP has no effect on the reaction when ammonia is the substrate. The allosteric effector GTP functions by stabilizing the protein conformation that binds the tetrahedral intermediate(s) formed during glutamine hydrolysis. Inhibited by the product CTP, via allosteric rather than competitive inhibition. In terms of biological role, catalyzes the ATP-dependent amination of UTP to CTP with either L-glutamine or ammonia as the source of nitrogen. Regulates intracellular CTP levels through interactions with the four ribonucleotide triphosphates. The protein is CTP synthase of Sulfolobus acidocaldarius (strain ATCC 33909 / DSM 639 / JCM 8929 / NBRC 15157 / NCIMB 11770).